Consider the following 484-residue polypeptide: DNA-binding protein (484 aa).

Residues 1-69 (MASNQHSQRE…ESAEEEEAEP (69 aa)) form a disordered region. Residues 51 to 60 (SMAAIPLSPE) show a composition bias toward low complexity. Phosphotyrosine; by host is present on tyrosine 150. Cysteine 239 and histidine 241 together coordinate Zn(2+). A flexible loop region spans residues 252 to 286 (VEMDVTSESGQRALKENPSKAKVAQNRWGRNVVQI). Zn(2+) is bound by residues cysteine 294, cysteine 310, cysteine 351, cysteine 353, cysteine 405, and cysteine 421. The interval 468 to 484 (ISLPTNHGDCREEPFDF) is C-terminal arm, DBP binding.

Belongs to the adenoviridae E2A DNA-binding protein family. As to quaternary structure, homomultimerizes on viral ssDNA bound to pTP. Forms a initiation complex with viral polymerase, pTP and hosts NFIA and POU2F1/OCT1. Interacts with host SRCAP.

Its subcellular location is the host nucleus. In terms of biological role, plays a role in the elongation phase of viral strand displacement replication by unwinding the template in an ATP-independent fashion, employing its capacity to form multimers. Also enhances the rate of initiation. Released from template upon second strand synthesis. Assembles in complex with viral pTP, viral pol, host NFIA and host POU2F1/OCT1 on viral origin of replication. Covers the whole ssDNA genome during synthesis. The complementary strand synthesis induces its relese from DNA template. May inhibit cellular transcription mediated by the interaction between host SRCAP and CBP. The chain is DNA-binding protein from Human adenovirus A serotype 12 (HAdV-12).